The following is a 252-amino-acid chain: Flap endonuclease Xni (252 aa).

Asp103 contacts Mg(2+). Residues 159 to 248 (VLPEQLPDYW…LKGNLQQLRL (90 aa)) enclose the 5'-3' exonuclease domain. K(+) is bound by residues Leu170, Ala171, Pro179, Ile181, and Ile184. The interval 183–188 (GIGPKT) is interaction with DNA.

It belongs to the Xni family. It depends on Mg(2+) as a cofactor. The cofactor is K(+).

In terms of biological role, has flap endonuclease activity. During DNA replication, flap endonucleases cleave the 5'-overhanging flap structure that is generated by displacement synthesis when DNA polymerase encounters the 5'-end of a downstream Okazaki fragment. The sequence is that of Flap endonuclease Xni from Photorhabdus laumondii subsp. laumondii (strain DSM 15139 / CIP 105565 / TT01) (Photorhabdus luminescens subsp. laumondii).